The chain runs to 889 residues: Alanine--tRNA ligase (889 aa).

Zn(2+) is bound by residues histidine 574, histidine 578, cysteine 682, and histidine 686.

This sequence belongs to the class-II aminoacyl-tRNA synthetase family. The cofactor is Zn(2+).

Its subcellular location is the cytoplasm. It catalyses the reaction tRNA(Ala) + L-alanine + ATP = L-alanyl-tRNA(Ala) + AMP + diphosphate. Its function is as follows. Catalyzes the attachment of alanine to tRNA(Ala) in a two-step reaction: alanine is first activated by ATP to form Ala-AMP and then transferred to the acceptor end of tRNA(Ala). Also edits incorrectly charged Ser-tRNA(Ala) and Gly-tRNA(Ala) via its editing domain. The protein is Alanine--tRNA ligase of Orientia tsutsugamushi (strain Ikeda) (Rickettsia tsutsugamushi).